Consider the following 115-residue polypeptide: T cell receptor beta variable 16 (115 aa).

The N-terminal stretch at 1 to 20 (MSPIFTCITILCLLAAGSPG) is a signal peptide. The Ig-like domain maps to 21–115 (EEVAQTPKHL…SAVYFCASSQ (95 aa)). Cys42 and Cys111 are disulfide-bonded.

In terms of assembly, alpha-beta TR is a heterodimer composed of an alpha and beta chain; disulfide-linked. The alpha-beta TR is associated with the transmembrane signaling CD3 coreceptor proteins to form the TR-CD3 (TcR or TCR). The assembly of alpha-beta TR heterodimers with CD3 occurs in the endoplasmic reticulum where a single alpha-beta TR heterodimer associates with one CD3D-CD3E heterodimer, one CD3G-CD3E heterodimer and one CD247 homodimer forming a stable octameric structure. CD3D-CD3E and CD3G-CD3E heterodimers preferentially associate with TR alpha and TR beta chains, respectively. The association of the CD247 homodimer is the last step of TcR assembly in the endoplasmic reticulum and is required for transport to the cell surface.

The protein resides in the cell membrane. In terms of biological role, v region of the variable domain of T cell receptor (TR) beta chain that participates in the antigen recognition. Alpha-beta T cell receptors are antigen specific receptors which are essential to the immune response and are present on the cell surface of T lymphocytes. Recognize peptide-major histocompatibility (MH) (pMH) complexes that are displayed by antigen presenting cells (APC), a prerequisite for efficient T cell adaptive immunity against pathogens. Binding of alpha-beta TR to pMH complex initiates TR-CD3 clustering on the cell surface and intracellular activation of LCK that phosphorylates the ITAM motifs of CD3G, CD3D, CD3E and CD247 enabling the recruitment of ZAP70. In turn ZAP70 phosphorylates LAT, which recruits numerous signaling molecules to form the LAT signalosome. The LAT signalosome propagates signal branching to three major signaling pathways, the calcium, the mitogen-activated protein kinase (MAPK) kinase and the nuclear factor NF-kappa-B (NF-kB) pathways, leading to the mobilization of transcription factors that are critical for gene expression and essential for T cell growth and differentiation. The T cell repertoire is generated in the thymus, by V-(D)-J rearrangement. This repertoire is then shaped by intrathymic selection events to generate a peripheral T cell pool of self-MH restricted, non-autoaggressive T cells. Post-thymic interaction of alpha-beta TR with the pMH complexes shapes TR structural and functional avidity. The protein is T cell receptor beta variable 16 of Homo sapiens (Human).